A 262-amino-acid polypeptide reads, in one-letter code: Beta-phosphoglucomutase (262 aa).

Asp29 (nucleophile) is an active-site residue. Residues Asp29 and Asp31 each contribute to the Mg(2+) site. 4-aspartylphosphate is present on Asp29. Asp31 functions as the Proton donor/acceptor in the catalytic mechanism. Beta-D-glucose 6-phosphate-binding residues include Asp31, Gly79, Arg82, Ser157, and Asn159. Asp215 contacts Mg(2+).

This sequence belongs to the HAD-like hydrolase superfamily. CbbY/CbbZ/Gph/YieH family. As to quaternary structure, monomer. The cofactor is Mg(2+). Post-translationally, autophosphorylated.

It catalyses the reaction beta-D-glucose 1-phosphate = beta-D-glucose 6-phosphate. Its function is as follows. Catalyzes the interconversion of D-glucose 1-phosphate (G1P) and D-glucose 6-phosphate (G6P), forming beta-D-glucose 1,6-(bis)phosphate (beta-G16P) as an intermediate. The polypeptide is Beta-phosphoglucomutase (Mycobacterium bovis (strain ATCC BAA-935 / AF2122/97)).